The primary structure comprises 68 residues: UPF0253 protein VF_0662 (68 aa).

It belongs to the UPF0253 family.

This chain is UPF0253 protein VF_0662, found in Aliivibrio fischeri (strain ATCC 700601 / ES114) (Vibrio fischeri).